Here is a 137-residue protein sequence, read N- to C-terminus: Transcription antitermination protein NusB (137 aa).

Belongs to the NusB family.

Its function is as follows. Involved in transcription antitermination. Required for transcription of ribosomal RNA (rRNA) genes. Binds specifically to the boxA antiterminator sequence of the ribosomal RNA (rrn) operons. The polypeptide is Transcription antitermination protein NusB (Finegoldia magna (strain ATCC 29328 / DSM 20472 / WAL 2508) (Peptostreptococcus magnus)).